The sequence spans 162 residues: Caveolin-2 (162 aa).

At 1–86 (MGLETEKADV…FEISKYVLYK (86 aa)) the chain is on the cytoplasmic side. Tyr19 bears the Phosphotyrosine; by SRC mark. A phosphoserine mark is found at Ser20 and Ser23. Positions 87–107 (FLTVFLAIPLAFAAGVLFAVL) form an intramembrane region, helical. Residues 108–162 (SCLHIWILMPFVKTCLMVLPSVQTIWRSVTDVVIAPLCASIGRSFSSVGLQLSHD) are Cytoplasmic-facing.

Belongs to the caveolin family. Monomer or homodimer. Interacts with CAV1; the interaction forms a stable heterooligomeric complex that is required for targeting to lipid rafts and for caveolae formation. Tyrosine phosphorylated forms do not form heterooligomers with the Tyr-19-phosphorylated form existing as a monomer or dimer. Interacts (tyrosine phosphorylated form) with the SH2 domain-containing proteins, RASA1, NCK1 and SRC. Interacts (tyrosine phosphorylated form) with INSR. Interacts (Tyr-19 phosphorylated form) with MAPK1 (phosphorylated form); the interaction, promoted by insulin, leads to nuclear location and MAPK1 activation. Interacts with STAT3; the interaction is increased on insulin-induced tyrosine phosphorylation leading to STAT activation. Phosphorylated on serine and tyrosine residues. CAV1 promotes phosphorylation on Ser-23 which then targets the complex to the plasma membrane, lipid rafts and caveolae. Phosphorylation on Tyr-19 is required for insulin-induced phosphorylation of MAPK1 and DNA binding of STAT3. Tyrosine phosphorylation is induced by both EGF and insulin.

It is found in the nucleus. It localises to the cytoplasm. Its subcellular location is the golgi apparatus membrane. The protein localises to the cell membrane. The protein resides in the membrane. It is found in the caveola. Its function is as follows. May act as a scaffolding protein within caveolar membranes. Interacts directly with G-protein alpha subunits and can functionally regulate their activity. Acts as an accessory protein in conjunction with CAV1 in targeting to lipid rafts and driving caveolae formation. Positive regulator of cellular mitogenesis of the MAPK signaling pathway. Required for the insulin-stimulated nuclear translocation and activation of MAPK1 and STAT3, and the subsequent regulation of cell cycle progression. The polypeptide is Caveolin-2 (CAV2) (Oryctolagus cuniculus (Rabbit)).